Reading from the N-terminus, the 508-residue chain is Photosystem II CP47 reaction center protein (508 aa).

6 helical membrane passes run 21–36, 101–115, 140–156, 203–218, 237–252, and 457–472; these read SVHI…WAGS, IVFS…IWHW, GIHL…FGAF, IAAG…FHLS, VLSS…AFVV, and SFAL…HGSR.

This sequence belongs to the PsbB/PsbC family. PsbB subfamily. In terms of assembly, PSII is composed of 1 copy each of membrane proteins PsbA, PsbB, PsbC, PsbD, PsbE, PsbF, PsbH, PsbI, PsbJ, PsbK, PsbL, PsbM, PsbT, PsbX, PsbY, PsbZ, Psb30/Ycf12, at least 3 peripheral proteins of the oxygen-evolving complex and a large number of cofactors. It forms dimeric complexes. The cofactor is Binds multiple chlorophylls. PSII binds additional chlorophylls, carotenoids and specific lipids..

Its subcellular location is the plastid. The protein localises to the chloroplast thylakoid membrane. Functionally, one of the components of the core complex of photosystem II (PSII). It binds chlorophyll and helps catalyze the primary light-induced photochemical processes of PSII. PSII is a light-driven water:plastoquinone oxidoreductase, using light energy to abstract electrons from H(2)O, generating O(2) and a proton gradient subsequently used for ATP formation. The chain is Photosystem II CP47 reaction center protein from Capsella bursa-pastoris (Shepherd's purse).